The primary structure comprises 206 residues: Alpha-amylase/trypsin inhibitor (206 aa).

8 disulfide bridges follow: cysteine 9–cysteine 205, cysteine 51–cysteine 61, cysteine 66–cysteine 72, cysteine 118–cysteine 194, cysteine 124–cysteine 177, cysteine 132–cysteine 142, cysteine 146–cysteine 155, and cysteine 156–cysteine 164.

This sequence belongs to the thaumatin family.

Its function is as follows. Inhibits both trypsin and alpha-amylase. Inhibits the growth of some plant fungal pathogens. The sequence is that of Alpha-amylase/trypsin inhibitor from Zea mays (Maize).